A 285-amino-acid chain; its full sequence is MSTILKWAGNKTAIMSELKKHLPAGPRLVEPFAGSCAVMMATDYPSYLVADINPDLINLYKKIAADCEAFISRARVLFEIANREVAYYNIRQEFNYSTEITDFMKAVYFLYLNRHGYRGLCRYNKSGHFNIPYGNYKNPYFPEKEIRKFAEKAQRATFICASFDETLAMLQVGDVVYCDPPYDGTFSGYHTDGFTEDDQYHLASVLEYRSSEGHPVIVSNSDTSLIRSLYRNFTHHYIKAKRSIGVSAGESKSATEIIAVSGARCWVGFDPSRGVDSSAVYEVRV.

Positions 7, 11, 51, and 179 each coordinate S-adenosyl-L-methionine.

It belongs to the N(4)/N(6)-methyltransferase family.

The enzyme catalyses a 2'-deoxyadenosine in DNA + S-adenosyl-L-methionine = an N(6)-methyl-2'-deoxyadenosine in DNA + S-adenosyl-L-homocysteine + H(+). Its function is as follows. An alpha subtype methylase that recognizes the double-stranded sequence 5'-GATC-3' and methylates A-2 on both strands. May play a regulatory role in the functions of the retron. The chain is Retron Ec67 DNA adenine methylase from Escherichia coli.